Here is a 626-residue protein sequence, read N- to C-terminus: Myelin-associated glycoprotein (626 aa).

Positions M1 to G19 are cleaved as a signal peptide. An interaction with RTN4R and RTN4RL2 region spans residues G20–A325. Residues G20 to P516 are Extracellular-facing. Residues W22–D120 form the Ig-like V-type domain. Intrachain disulfides connect C37/C165, C42/C100, and C159/C217. Y65 to K67 contacts a ganglioside GT1b (d18:1(4E)). N-linked (GlcNAc...) asparagine glycosylation is present at N99. N106 is a glycosylation site (N-linked (GlcNAc...) asparagine; partial). A ganglioside GT1b (d18:1(4E)) is bound by residues R118 and Y124–T128. Ig-like C2-type domains are found at residues N139 to K237, V241 to A325, W327 to A412, and P413 to R508. N223 and N246 each carry an N-linked (GlcNAc...) asparagine glycan. A disulfide bridge connects residues C261 and C305. N315 is a glycosylation site (N-linked (GlcNAc...) asparagine). Cysteines 347 and 392 form a disulfide. N406 is a glycosylation site (N-linked (GlcNAc...) asparagine). 2 disulfides stabilise this stretch: C421-C430 and C432-C488. Residues N450 and N454 are each glycosylated (N-linked (GlcNAc...) asparagine). A helical membrane pass occupies residues V517 to T536. A lipid anchor (S-palmitoyl cysteine) is attached at C531. The Cytoplasmic portion of the chain corresponds to R537–K626. Phosphoserine occurs at positions 545, 547, and 549. The interval L577–K626 is required for normal axon myelination in the central nervous system. The segment at R582 to K608 is disordered.

This sequence belongs to the immunoglobulin superfamily. SIGLEC (sialic acid binding Ig-like lectin) family. In terms of assembly, monomer and homodimer. Interacts (via the first three N-terminal Ig-like domains) with RTN4R and RTN4RL2. Interacts with RTN4R. Interacts with isoform 2 of BSG. Post-translationally, N-glycosylated. In terms of processing, phosphorylated on tyrosine residues. Ubiquitinated, leading to proteasomal degradation. As to expression, both isoform 1 and isoform 2 are detected in myelinated structures in the central and peripheral nervous system, in periaxonal myelin and at Schmidt-Lanterman incisures. Detected in optic nerve, in oligodendroglia and in periaxonal myelin sheaths. Detected in compact myelin (at protein level). Both isoform 1 and isoform 2 are detected in the central and peripheral nervous system.

The protein localises to the cell membrane. Its subcellular location is the membrane raft. Adhesion molecule that mediates interactions between myelinating cells and neurons by binding to neuronal sialic acid-containing gangliosides and to the glycoproteins RTN4R and RTN4RL2. Not required for initial myelination, but seems to play a role in the maintenance of normal axon myelination. Protects motoneurons against apoptosis, also after injury; protection against apoptosis is probably mediated via interaction with neuronal RTN4R and RTN4RL2. Required to prevent degeneration of myelinated axons in adults; this probably depends on binding to gangliosides on the axon cell membrane. Negative regulator of neurite outgrowth; in dorsal root ganglion neurons the inhibition is mediated primarily via binding to neuronal RTN4R or RTN4RL2 and to a lesser degree via binding to neuronal gangliosides. In cerebellar granule cells the inhibition is mediated primarily via binding to neuronal gangliosides. In sensory neurons, inhibition of neurite extension depends only partially on RTN4R, RTN4RL2 and gangliosides. Inhibits axon longitudinal growth. Inhibits axon outgrowth by binding to RTN4R. Preferentially binds to alpha-2,3-linked sialic acid. Binds ganglioside Gt1b. In Homo sapiens (Human), this protein is Myelin-associated glycoprotein (MAG).